Consider the following 305-residue polypeptide: UDP-3-O-acyl-N-acetylglucosamine deacetylase (305 aa).

3 residues coordinate Zn(2+): H78, H237, and D241. H264 (proton donor) is an active-site residue.

The protein belongs to the LpxC family. It depends on Zn(2+) as a cofactor.

The catalysed reaction is a UDP-3-O-[(3R)-3-hydroxyacyl]-N-acetyl-alpha-D-glucosamine + H2O = a UDP-3-O-[(3R)-3-hydroxyacyl]-alpha-D-glucosamine + acetate. It participates in glycolipid biosynthesis; lipid IV(A) biosynthesis; lipid IV(A) from (3R)-3-hydroxytetradecanoyl-[acyl-carrier-protein] and UDP-N-acetyl-alpha-D-glucosamine: step 2/6. Catalyzes the hydrolysis of UDP-3-O-myristoyl-N-acetylglucosamine to form UDP-3-O-myristoylglucosamine and acetate, the committed step in lipid A biosynthesis. This chain is UDP-3-O-acyl-N-acetylglucosamine deacetylase, found in Burkholderia cenocepacia (strain ATCC BAA-245 / DSM 16553 / LMG 16656 / NCTC 13227 / J2315 / CF5610) (Burkholderia cepacia (strain J2315)).